Consider the following 110-residue polypeptide: Cytochrome c oxidase subunit 4B (110 aa).

3 consecutive transmembrane segments (helical) span residues 29 to 49 (MIAFVLMILLTLIAFAAVGYE), 55 to 75 (FVVPFILLLAAVQVAFQLYYF), and 89 to 109 (FIYGGVAVMLLLVWAFTTVVW).

This sequence belongs to the cytochrome c oxidase bacterial subunit 4 family.

It is found in the cell membrane. It catalyses the reaction 4 Fe(II)-[cytochrome c] + O2 + 8 H(+)(in) = 4 Fe(III)-[cytochrome c] + 2 H2O + 4 H(+)(out). The chain is Cytochrome c oxidase subunit 4B (caaD) from Bacillus sp. (strain PS3).